Consider the following 249-residue polypeptide: Mannose-binding protein C (249 aa).

The signal sequence occupies residues 1–20 (MSLFTSLPFLLLTAVTASCA). The Collagen-like domain occupies 43–101 (GINGIPGKDGRDGAKGEKGEPGQGLRGSQGPPGKMGPQGTPGIPGIPGPIGQKGDPGEN). The disordered stretch occupies residues 43–103 (GINGIPGKDG…QKGDPGENMG (61 aa)). Position 48 is a 4-hydroxyproline (Pro-48). Basic and acidic residues predominate over residues 50–62 (KDGRDGAKGEKGE). 4-hydroxyproline is present on residues Pro-63, Pro-74, Pro-83, and Pro-86. The span at 79–95 (PQGTPGIPGIPGPIGQK) shows a compositional bias: low complexity. A coiled-coil region spans residues 113 to 131 (RATLQSELNQIKNWLIFSL). In terms of domain architecture, C-type lectin spans 135–246 (VGKKAFFTNG…CSASFLTVCE (112 aa)). 2 cysteine pairs are disulfide-bonded: Cys-156-Cys-245 and Cys-223-Cys-237.

In terms of assembly, oligomeric complex of 3 or more homotrimers. Interacts with MASP1 and MASP2. Interacts with MEP1A and MEP1B and may inhibit their catalytic activity. Post-translationally, hydroxylation on proline residues within the sequence motif, GXPG, is most likely to be 4-hydroxy as this fits the requirement for 4-hydroxylation in vertebrates.

Its subcellular location is the secreted. In terms of biological role, calcium-dependent lectin involved in innate immune defense. Binds mannose, fucose and N-acetylglucosamine on different microorganisms and activates the lectin complement pathway. Binds to late apoptotic cells, as well as to apoptotic blebs and to necrotic cells, but not to early apoptotic cells, facilitating their uptake by macrophages. The chain is Mannose-binding protein C (MBL) from Bos taurus (Bovine).